We begin with the raw amino-acid sequence, 287 residues long: uncharacterized protein (287 aa).

The THUMP domain occupies Cys-133–Gln-239. A disordered region spans residues Glu-257 to Glu-287. Basic and acidic residues predominate over residues Ser-266–Glu-287.

This is an uncharacterized protein from Schizosaccharomyces pombe (strain 972 / ATCC 24843) (Fission yeast).